Reading from the N-terminus, the 549-residue chain is Arginine--tRNA ligase (549 aa).

The 'HIGH' region signature appears at Ala-122–His-132.

It belongs to the class-I aminoacyl-tRNA synthetase family. Monomer.

It localises to the cytoplasm. The catalysed reaction is tRNA(Arg) + L-arginine + ATP = L-arginyl-tRNA(Arg) + AMP + diphosphate. In Mycoplasmoides gallisepticum (strain R(low / passage 15 / clone 2)) (Mycoplasma gallisepticum), this protein is Arginine--tRNA ligase.